A 343-amino-acid chain; its full sequence is Dihydroorotase (343 aa).

2 residues coordinate Zn(2+): His-13 and His-15. Substrate contacts are provided by residues 15 to 17 (HFR) and Asn-41. Positions 98, 135, and 173 each coordinate Zn(2+). Residue Lys-98 is modified to N6-carboxylysine. His-135 lines the substrate pocket. Leu-218 serves as a coordination point for substrate. A Zn(2+)-binding site is contributed by Asp-246. Residue Asp-246 is part of the active site. Residues His-250 and Ala-262 each contribute to the substrate site.

This sequence belongs to the metallo-dependent hydrolases superfamily. DHOase family. Class II DHOase subfamily. In terms of assembly, homodimer. Zn(2+) is required as a cofactor.

It catalyses the reaction (S)-dihydroorotate + H2O = N-carbamoyl-L-aspartate + H(+). The protein operates within pyrimidine metabolism; UMP biosynthesis via de novo pathway; (S)-dihydroorotate from bicarbonate: step 3/3. Catalyzes the reversible cyclization of carbamoyl aspartate to dihydroorotate. In Marinomonas sp. (strain MWYL1), this protein is Dihydroorotase.